Here is a 484-residue protein sequence, read N- to C-terminus: Glutamyl-tRNA(Gln) amidotransferase subunit A (484 aa).

Catalysis depends on charge relay system residues Lys76 and Ser151. The active-site Acyl-ester intermediate is the Ser175.

The protein belongs to the amidase family. GatA subfamily. Heterotrimer of A, B and C subunits.

The catalysed reaction is L-glutamyl-tRNA(Gln) + L-glutamine + ATP + H2O = L-glutaminyl-tRNA(Gln) + L-glutamate + ADP + phosphate + H(+). Allows the formation of correctly charged Gln-tRNA(Gln) through the transamidation of misacylated Glu-tRNA(Gln) in organisms which lack glutaminyl-tRNA synthetase. The reaction takes place in the presence of glutamine and ATP through an activated gamma-phospho-Glu-tRNA(Gln). The chain is Glutamyl-tRNA(Gln) amidotransferase subunit A from Saccharophagus degradans (strain 2-40 / ATCC 43961 / DSM 17024).